Here is a 156-residue protein sequence, read N- to C-terminus: Small ribosomal subunit protein uS7 (156 aa).

The protein belongs to the universal ribosomal protein uS7 family. As to quaternary structure, part of the 30S ribosomal subunit. Contacts proteins S9 and S11.

In terms of biological role, one of the primary rRNA binding proteins, it binds directly to 16S rRNA where it nucleates assembly of the head domain of the 30S subunit. Is located at the subunit interface close to the decoding center, probably blocks exit of the E-site tRNA. This chain is Small ribosomal subunit protein uS7, found in Brucella abortus (strain S19).